An 81-amino-acid chain; its full sequence is MKKIILALIRFYQKFISPLKPPTCIYTPTCSEYTYQAVKKFGVFKGLFLGFKRILRCNPLHEGGEDPVPDKFYIIKGRRLD.

It belongs to the UPF0161 family.

The protein localises to the cell inner membrane. Its function is as follows. Could be involved in insertion of integral membrane proteins into the membrane. The protein is Putative membrane protein insertion efficiency factor of Thermosipho melanesiensis (strain DSM 12029 / CIP 104789 / BI429).